Reading from the N-terminus, the 163-residue chain is 2-C-methyl-D-erythritol 2,4-cyclodiphosphate synthase (163 aa).

A divalent metal cation contacts are provided by aspartate 9 and histidine 11. 4-CDP-2-C-methyl-D-erythritol 2-phosphate is bound by residues 9–11 (DVH) and 36–37 (HS). Histidine 44 contacts a divalent metal cation. Residues 58–60 (DIG), 63–67 (FPDDD), 134–137 (TTSE), phenylalanine 141, and arginine 144 each bind 4-CDP-2-C-methyl-D-erythritol 2-phosphate.

This sequence belongs to the IspF family. In terms of assembly, homotrimer. The cofactor is a divalent metal cation.

The catalysed reaction is 4-CDP-2-C-methyl-D-erythritol 2-phosphate = 2-C-methyl-D-erythritol 2,4-cyclic diphosphate + CMP. Its pathway is isoprenoid biosynthesis; isopentenyl diphosphate biosynthesis via DXP pathway; isopentenyl diphosphate from 1-deoxy-D-xylulose 5-phosphate: step 4/6. Involved in the biosynthesis of isopentenyl diphosphate (IPP) and dimethylallyl diphosphate (DMAPP), two major building blocks of isoprenoid compounds. Catalyzes the conversion of 4-diphosphocytidyl-2-C-methyl-D-erythritol 2-phosphate (CDP-ME2P) to 2-C-methyl-D-erythritol 2,4-cyclodiphosphate (ME-CPP) with a corresponding release of cytidine 5-monophosphate (CMP). The sequence is that of 2-C-methyl-D-erythritol 2,4-cyclodiphosphate synthase from Halorhodospira halophila (strain DSM 244 / SL1) (Ectothiorhodospira halophila (strain DSM 244 / SL1)).